The primary structure comprises 175 residues: ATP synthase subunit b (175 aa).

Residues 24–44 form a helical membrane-spanning segment; the sequence is LVLWQIAATVILIIVVRIFLW.

Belongs to the ATPase B chain family. In terms of assembly, F-type ATPases have 2 components, F(1) - the catalytic core - and F(0) - the membrane proton channel. F(1) has five subunits: alpha(3), beta(3), gamma(1), delta(1), epsilon(1). F(0) has three main subunits: a(1), b(2) and c(10-14). The alpha and beta chains form an alternating ring which encloses part of the gamma chain. F(1) is attached to F(0) by a central stalk formed by the gamma and epsilon chains, while a peripheral stalk is formed by the delta and b chains.

It localises to the cell membrane. Its function is as follows. F(1)F(0) ATP synthase produces ATP from ADP in the presence of a proton or sodium gradient. F-type ATPases consist of two structural domains, F(1) containing the extramembraneous catalytic core and F(0) containing the membrane proton channel, linked together by a central stalk and a peripheral stalk. During catalysis, ATP synthesis in the catalytic domain of F(1) is coupled via a rotary mechanism of the central stalk subunits to proton translocation. Component of the F(0) channel, it forms part of the peripheral stalk, linking F(1) to F(0). In Acholeplasma laidlawii (strain PG-8A), this protein is ATP synthase subunit b.